The sequence spans 1216 residues: ATP-dependent helicase/nuclease subunit A (1216 aa).

The region spanning 26-488 (QKKTAEQIEA…ILLKANFRSS (463 aa)) is the UvrD-like helicase ATP-binding domain. 47–54 (ASAGSGKT) provides a ligand contact to ATP. A UvrD-like helicase C-terminal domain is found at 515-802 (KHQLVFANTK…ELMTIHKSKG (288 aa)).

The protein belongs to the helicase family. AddA subfamily. Heterodimer of AddA and AddB/RexB. Mg(2+) is required as a cofactor.

The catalysed reaction is Couples ATP hydrolysis with the unwinding of duplex DNA by translocating in the 3'-5' direction.. The enzyme catalyses ATP + H2O = ADP + phosphate + H(+). Functionally, the heterodimer acts as both an ATP-dependent DNA helicase and an ATP-dependent, dual-direction single-stranded exonuclease. Recognizes the chi site generating a DNA molecule suitable for the initiation of homologous recombination. The AddA nuclease domain is required for chi fragment generation; this subunit has the helicase and 3' -&gt; 5' nuclease activities. The sequence is that of ATP-dependent helicase/nuclease subunit A from Streptococcus pneumoniae (strain ATCC 700669 / Spain 23F-1).